A 420-amino-acid polypeptide reads, in one-letter code: Ribosome biogenesis protein WDR12 homolog (420 aa).

The tract at residues 10–92 is ubiquitin-like (UBL) domain; the sequence is VQVHLKTKQE…EDAIEIEYVE (83 aa). 7 WD repeats span residues 104–142, 143–185, 192–231, 250–288, 290–329, 335–375, and 379–417; these read LHDDWVSAVKARGKWILSGCYDNSLNLWTNKGKHILTIS, GHTA…NAVD, GHERGVDSVSVSPDGLRFATGSWDTMLKVWSAELDDGVEG, GHRESVSAVQWMDATTLLTGSWDYTLKVWDLSLEGIKTE, STNKSIFDASYSKLNRLILTASADKNLRLYDPRTNQGSVV, GHNA…APLY, and GHGDKVLDIDWSNPKYIVSGGVDNSVRVFKSRKALAEDT.

Belongs to the WD repeat WDR12/YTM1 family.

It localises to the nucleus. Its subcellular location is the nucleolus. The protein resides in the nucleoplasm. Functionally, required for maturation of ribosomal RNAs and formation of the large ribosomal subunit. The protein is Ribosome biogenesis protein WDR12 homolog of Drosophila simulans (Fruit fly).